Reading from the N-terminus, the 198-residue chain is Suppressor of cytokine signaling 2 (198 aa).

A disordered region spans residues 1-29 (MTLRCLEPSGNGGEGTRSQWGTAGSAEEP). The tract at residues 1–75 (MTLRCLEPSG…PEGTFLIRDS (75 aa)) is interaction with AREL1. Serine 30 carries the post-translational modification Phosphoserine. The SH2 domain maps to 48 to 156 (WYWGSMTVNE…TVHLYLTKPL (109 aa)). Position 52 is a phosphoserine; by PKC (serine 52). Positions 151-197 (YLTKPLYTSAPSLQHLCRLTINKCTGAIWGLPLPTRLKDYLEEYKFQ) constitute an SOCS box domain. A Glycyl lysine isopeptide (Lys-Gly) (interchain with G-Cter in ubiquitin) cross-link involves residue lysine 173.

In terms of assembly, substrate-recognition component of the ECS(SOCS2) complex, composed of SOCS2, CUL5, ELOB, ELOC and RNF7/RBX2. Interacts with IGF1R. Interacts with DCUN1D1. Post-translationally, ubiquitinated; mediated by AREL1 and leading to its subsequent proteasomal degradation. Ubiquitination is dependent on its phosphorylation at Ser-52, by PKC. Ubiquitination is stimulated by LPS. Phosphorylation at Ser-52 by PKC facilitates its ubiquitination and proteasomal degradation. In terms of tissue distribution, high expression in heart, placenta, lung, kidney and prostate. Predominantly expressed in pulmonary epithelia cells, specifically type II pneumocytes.

It localises to the cytoplasm. The protein operates within protein modification; protein ubiquitination. With respect to regulation, substrate-binding is prevented by the covalent inhibitor MN551 that cross-links with Cys-111. Also inhibited by a MN551 derivative, MN714, which contains a pivaloyloxymethyl that allows cell permeability. Its function is as follows. Substrate-recognition component of a cullin-5-RING E3 ubiquitin-protein ligase complex (ECS complex, also named CRL5 complex), which mediates the ubiquitination and subsequent proteasomal degradation of target proteins, such as EPOR and GHR. Specifically recognizes and binds phosphorylated proteins via its SH2 domain, promoting their ubiquitination. The ECS(SOCS2) complex acts as a key regulator of growth hormone receptor (GHR) levels by mediating ubiquitination and degradation of GHR, following GHR phosphorylation by JAK2. The ECS(SOCS2) also catalyzes ubiquitination and degradation of JAK2-phosphorylated EPOR. The protein is Suppressor of cytokine signaling 2 of Homo sapiens (Human).